The chain runs to 493 residues: Dipeptide permease D (493 aa).

The next 13 membrane-spanning stretches (helical) occupy residues 14 to 34 (VVALQIWEYFSFYGMRALLIL), 49 to 69 (ELFSAYCSLVYVTPILGGYLA), 91 to 111 (LVLGASEIAPTFLYLSLAIIV), 138 to 158 (GGFSLLYAAGNIGSIVAPIAC), 167 to 187 (WAMGFALAAIGMLAGLVIFLC), 212 to 232 (NWGWLLILLVAAPLLITVLFW), 235 to 255 (WSVYALIVATAIGLVVLAKIY), 267 to 287 (LGLIVTLTLFSMLFWAFAQQG), 312 to 332 (MFQSVNAFAVMLCGVVLAWLV), 344 to 364 (IWGKFALGLGLMSAGFCILTL), 379 to 399 (LMVLGLAVMGFAELFIDPVAM), 413 to 433 (VLTGIYMLLSGAIANYLAGVI), and 458 to 478 (VFEQITWGALACVGVVLLIWL).

It belongs to the major facilitator superfamily. Proton-dependent oligopeptide transporter (POT/PTR) (TC 2.A.17) family. DtpD subfamily.

The protein localises to the cell inner membrane. In terms of biological role, probable proton-dependent permease that transports dipeptides. This Salmonella typhimurium (strain 14028s / SGSC 2262) protein is Dipeptide permease D.